We begin with the raw amino-acid sequence, 421 residues long: UDP-N-acetylglucosamine 1-carboxyvinyltransferase (421 aa).

Position 23–24 (23–24) interacts with phosphoenolpyruvate; sequence KN. R92 is a UDP-N-acetyl-alpha-D-glucosamine binding site. The active-site Proton donor is the C116. C116 is modified (2-(S-cysteinyl)pyruvic acid O-phosphothioketal). Residues 121-125, 161-164, D306, and I328 contribute to the UDP-N-acetyl-alpha-D-glucosamine site; these read RPVDL and KVSV.

Belongs to the EPSP synthase family. MurA subfamily.

It is found in the cytoplasm. The catalysed reaction is phosphoenolpyruvate + UDP-N-acetyl-alpha-D-glucosamine = UDP-N-acetyl-3-O-(1-carboxyvinyl)-alpha-D-glucosamine + phosphate. It participates in cell wall biogenesis; peptidoglycan biosynthesis. Cell wall formation. Adds enolpyruvyl to UDP-N-acetylglucosamine. The sequence is that of UDP-N-acetylglucosamine 1-carboxyvinyltransferase from Vibrio vulnificus (strain CMCP6).